Consider the following 403-residue polypeptide: S-arrestin (403 aa).

Threonine 231 is modified (phosphothreonine). Positions 381–403 (RQNLKDTGENTEGKKDEDAGQDE) are disordered.

This sequence belongs to the arrestin family. As to quaternary structure, monomer. Homodimer. Homotetramer. Interacts with RHO (via the phosphorylated C-terminus). Retina and pineal gland.

The protein localises to the cell projection. It is found in the cilium. The protein resides in the photoreceptor outer segment. Its subcellular location is the membrane. Functionally, binds to photoactivated, phosphorylated RHO and terminates RHO signaling via G-proteins by competing with G-proteins for the same binding site on RHO. May play a role in preventing light-dependent degeneration of retinal photoreceptor cells. In Rattus norvegicus (Rat), this protein is S-arrestin (Sag).